We begin with the raw amino-acid sequence, 260 residues long: Large ribosomal subunit protein uL30 (260 aa).

Methionine 1 is subject to N-acetylmethionine. 5 tandem repeats follow at residues 7-18, 19-30, 31-42, 43-54, and 55-66. The interval 7–66 is 5 X 12 AA tandem repeats; it reads KKKKVAAALGTLKKKKVPAVPETLKKKRRNFAELKVKRLRKKFALKTLRKARRKLIYEKA. At threonine 29 the chain carries Phosphothreonine. An N6-acetyllysine modification is found at lysine 136. Residue lysine 139 is modified to N6-succinyllysine. Tyrosine 151 is subject to Phosphotyrosine.

The protein belongs to the universal ribosomal protein uL30 family. In terms of assembly, component of the large ribosomal subunit. Homodimer. Interacts with DHX33.

It localises to the cytoplasm. Component of the large ribosomal subunit. The ribosome is a large ribonucleoprotein complex responsible for the synthesis of proteins in the cell. Binds to G-rich structures in 28S rRNA and in mRNAs. Plays a regulatory role in the translation apparatus; inhibits cell-free translation of mRNAs. This Rattus norvegicus (Rat) protein is Large ribosomal subunit protein uL30 (Rpl7).